Here is a 259-residue protein sequence, read N- to C-terminus: Factor V activator (259 aa).

The N-terminal stretch at 1–18 is a signal peptide; that stretch reads MVLIRVLANLLVLQLSYA. A propeptide spanning residues 19 to 24 is cleaved from the precursor; sequence QKSSEL. Residues 25–251 form the Peptidase S1 domain; the sequence is VVGGDECDIN…YTDWIQSIIA (227 aa). 6 disulfides stabilise this stretch: cysteine 31-cysteine 165, cysteine 52-cysteine 68, cysteine 100-cysteine 258, cysteine 144-cysteine 212, cysteine 176-cysteine 191, and cysteine 202-cysteine 227. Catalysis depends on charge relay system residues histidine 67 and aspartate 112. Catalysis depends on serine 206, which acts as the Charge relay system. The N-linked (GlcNAc...) asparagine glycan is linked to asparagine 253.

It belongs to the peptidase S1 family. Snake venom subfamily. As to quaternary structure, monomer. N-glycosylated. Contains 4.4% of hexoses, 4.4% of hexosamines and 3.1% of sialic acids. As to expression, expressed by the venom gland.

The protein localises to the secreted. It catalyses the reaction Fully activates human clotting factor V by a single cleavage at the 1545-Trp-Tyr-Leu-Arg-|-Ser-Asn-Asn-Gly-1552 bond. Cattle, but not rabbit, factor V is cleaved, and no other proteins of the clotting system are attacked. Esterase activity is observed on Bz-Arg-OEt and Tos-Arg-OMe, and amidase activity on Phe-pipecolyl-Arg-NHPhNO2.. Its activity is regulated as follows. Inhibited by D-Phe-Pro-Arg-chloromethyl ketone (FPRCK) (98%), PMSF (93%), benzamidine (67%), and diisopropylfluorophosphate (DFP). Is not inhibited by BPTI, antithrombin and EDTA. Functionally, venom serine protease that converts factor V (F5) to the active form Va in the presence of calcium ions and phospholipids. It cleaves the Arg(1545)-Ser(1546) linkage in the human factor V molecule. Has hydrolytic activities against BAEE (1.2 U/mg), TAME, and Pro-Phe-Arg-MCA (4.9 U/mg). Shows coagulant activity. This is Factor V activator from Macrovipera lebetinus (Levantine viper).